The following is a 156-amino-acid chain: Peroxisomal membrane associated protein 20 (156 aa).

Positions 2–156 (VAVGSTLPKV…SSADKVLSSL (155 aa)) constitute a Thioredoxin domain. Cys-43 functions as the Cysteine sulfenic acid (-SOH) intermediate in the catalytic mechanism.

Belongs to the peroxiredoxin family. Prx5 subfamily. In terms of assembly, homodimer; disulfide-linked, upon oxidation.

Its subcellular location is the cytoplasm. It localises to the nucleus. May act as a chaperone rather than a peroxidase. Has no thioredoxin-dependent peroxidase activity. Shows weak chaperone activity. The chain is Peroxisomal membrane associated protein 20 from Schizosaccharomyces pombe (strain 972 / ATCC 24843) (Fission yeast).